The chain runs to 150 residues: Interferon antagonist OPG027 (150 aa).

Belongs to the orthopoxvirus OPG027 family.

Its function is as follows. Inhibits antiviral activity induced by type I interferons. Does not block signal transduction of IFN, but is important to counteract the host antiviral state induced by a pre-treatment with IFN. In Cynomys gunnisoni (Gunnison's prairie dog), this protein is Interferon antagonist OPG027 (OPG027).